Here is a 1085-residue protein sequence, read N- to C-terminus: KN motif and ankyrin repeat domain-containing protein 2 (1085 aa).

The segment covering 136-145 (KLEEEKDGRR) has biased composition (basic and acidic residues). Residues 136-192 (KLEEEKDGRRFSNLGSMHSSMAGSNTSLSSAHSFNRAQGGGSYTPMSSGLSTPVSPT) are disordered. Composition is skewed to polar residues over residues 148-171 (NLGS…SFNR) and 179-189 (TPMSSGLSTPV). A coiled-coil region spans residues 196–216 (LQHVREQMAVALRKIRELEEQ). Positions 273–295 (NGAGAANKATGSLSPTTPGSLQD) are disordered. Over residues 281-295 (ATGSLSPTTPGSLQD) the composition is skewed to polar residues. Residues 356–383 (VGLLEVQLRKTMQELQSAQQQVEAAQKE) are a coiled coil. Disordered stretches follow at residues 557-736 (RKAD…SNVQ), 752-791 (TTTQ…SAKQ), and 798-817 (TTKP…TDSL). Positions 589 to 600 (SSSESSEDESDA) are enriched in acidic residues. Positions 601–611 (SEYHEATEKLP) are enriched in basic and acidic residues. The span at 614-648 (ATPQSLVSSCIPQLASETPATQTAQHSTAQIPTNH) shows a compositional bias: polar residues. Positions 649 to 668 (TPAAQTTSQSHTTDATTQQH) are enriched in low complexity. Composition is skewed to polar residues over residues 706–736 (NPPS…SNVQ) and 760–788 (SAKP…TDGS). The span at 798-810 (TTKPAADTATPPT) shows a compositional bias: low complexity. 5 ANK repeats span residues 895 to 925 (NGNT…NADK), 929 to 962 (AGYT…DVNA), 967 to 996 (AGQT…QVNL), 1000 to 1030 (DGST…DATL), and 1034 to 1063 (DGST…FAKP). Positions 1064–1085 (PSPVSPKSPILGSSPPSSSELK) are disordered. The span at 1070–1085 (KSPILGSSPPSSSELK) shows a compositional bias: low complexity.

Its subcellular location is the cytoplasm. The protein resides in the mitochondrion. Its function is as follows. May be involved in different biological processes including transcription and apoptosis by sequestering specific proteins outside of the nucleus. Involved in actin stress fibers formation probably through its interaction with ARHGDIA and the regulation of the Rho signaling pathway. May thereby play a role in cell adhesion and migration, regulating for instance podocytes migration during development of the kidney. The sequence is that of KN motif and ankyrin repeat domain-containing protein 2 (kank2) from Danio rerio (Zebrafish).